The primary structure comprises 424 residues: Tyrosine--tRNA ligase (424 aa).

L-tyrosine is bound at residue Tyr-37. Positions 42–51 (PTADSLHLGH) match the 'HIGH' region motif. Lys-144 carries the post-translational modification N6-acetyllysine. L-tyrosine-binding residues include Tyr-175 and Gln-179. The 'KMSKS' region signature appears at 235–239 (KFGKT). Lys-238 contacts ATP. Positions 357–414 (ADLMQALVDSELQPSRGQARKTIASNAITINGEKQSDPEYFFKEEDRLFGRFTLLRRG) constitute an S4 RNA-binding domain.

The protein belongs to the class-I aminoacyl-tRNA synthetase family. TyrS type 1 subfamily. As to quaternary structure, homodimer.

It is found in the cytoplasm. The enzyme catalyses tRNA(Tyr) + L-tyrosine + ATP = L-tyrosyl-tRNA(Tyr) + AMP + diphosphate + H(+). Catalyzes the attachment of tyrosine to tRNA(Tyr) in a two-step reaction: tyrosine is first activated by ATP to form Tyr-AMP and then transferred to the acceptor end of tRNA(Tyr). The polypeptide is Tyrosine--tRNA ligase (Escherichia coli O8 (strain IAI1)).